We begin with the raw amino-acid sequence, 187 residues long: Ribosome maturation factor RimM (187 aa).

The segment covering 1 to 17 (MTSTPSPSTADPNSTND) has biased composition (polar residues). The disordered stretch occupies residues 1-21 (MTSTPSPSTADPNSTNDWLPV). Positions 111 to 184 (EGEFHLLDLV…WLLLTPPPGL (74 aa)) constitute a PRC barrel domain.

The protein belongs to the RimM family. As to quaternary structure, binds ribosomal protein uS19.

The protein localises to the cytoplasm. In terms of biological role, an accessory protein needed during the final step in the assembly of 30S ribosomal subunit, possibly for assembly of the head region. Essential for efficient processing of 16S rRNA. May be needed both before and after RbfA during the maturation of 16S rRNA. It has affinity for free ribosomal 30S subunits but not for 70S ribosomes. This chain is Ribosome maturation factor RimM, found in Synechococcus sp. (strain CC9311).